A 427-amino-acid polypeptide reads, in one-letter code: GTPase Obg (427 aa).

Residues 1–158 (MFVDIAKIYV…LWVILELKVL (158 aa)) enclose the Obg domain. The OBG-type G domain maps to 159-330 (ADVGLIGYPN…VLKRAYELLK (172 aa)). Residues 165 to 172 (GYPNVGKS), 190 to 194 (FTTKY), 212 to 215 (DIPG), 282 to 285 (NKMD), and 311 to 313 (SAA) contribute to the GTP site. Positions 172 and 192 each coordinate Mg(2+). The OCT domain occupies 347-427 (FVYYKKKDVK…ILDVEFEYYE (81 aa)).

Belongs to the TRAFAC class OBG-HflX-like GTPase superfamily. OBG GTPase family. Monomer. Mg(2+) serves as cofactor.

The protein localises to the cytoplasm. An essential GTPase which binds GTP, GDP and possibly (p)ppGpp with moderate affinity, with high nucleotide exchange rates and a fairly low GTP hydrolysis rate. Plays a role in control of the cell cycle, stress response, ribosome biogenesis and in those bacteria that undergo differentiation, in morphogenesis control. This chain is GTPase Obg, found in Caldicellulosiruptor bescii (strain ATCC BAA-1888 / DSM 6725 / KCTC 15123 / Z-1320) (Anaerocellum thermophilum).